The sequence spans 217 residues: GRB2-related adapter protein (217 aa).

Residues 1–58 (MESVALYSFQATESDELAFNKGDTLKILNMEDDQNWYKAELRGAEGFVPKNYIRVKPH) enclose the SH3 1 domain. In terms of domain architecture, SH2 spans 60–152 (WYSGRISRQL…RRQIFLCDEQ (93 aa)). Residues 158–217 (SRACFAQAQFDFSAQDPSQLSLRRGDIVEVVEREDPHWWRGRAGGRLGFFPRSYVQPVHL) form the SH3 2 domain.

The protein belongs to the GRB2/sem-5/DRK family. As to quaternary structure, associates through its SH2 domain with ligand-activated receptors for stem cell factor (KIT) and erythropoietin (EPOR). Also forms a stable complex with the Bcr-Abl oncoprotein. GRAP is associated with the Ras guanine nucleotide exchange factor SOS1, primarily through its N-terminal SH3 domain. Interacts with phosphorylated LAT upon TCR activation. Interacts with SHB. As to expression, expressed in inner ear, in neruonal fibers innervating cochlear and utricular auditory hair cells (at protein level).

Its subcellular location is the membrane. The protein localises to the synapse. Couples signals from receptor and cytoplasmic tyrosine kinases to the Ras signaling pathway. Plays a role in the inner ear and in hearing. In Mus musculus (Mouse), this protein is GRB2-related adapter protein.